The sequence spans 764 residues: Transient receptor potential cation channel subfamily V member 2 (764 aa).

The tract at residues 1–46 (MTSPSSSPVFRLETLDGGQEDGSEADRGKLDFGSGLPPMESQFQGE) is disordered. Residues 1 to 388 (MTSPSSSPVF…LLQAKWDLLI (388 aa)) are required for interaction with SLC50A1. Residues 1-390 (MTSPSSSPVF…QAKWDLLIPK (390 aa)) are Cytoplasmic-facing. Ser-6 carries the post-translational modification Phosphoserine. ANK repeat units lie at residues 72–114 (NRFD…TEGS), 115–161 (TGKT…DDYY), 162–207 (RGHS…TCFY), 208–243 (FGEL…ATDS), 244–292 (QGNT…IRNL), and 293–319 (QDLT…REFS). A helical membrane pass occupies residues 391–411 (FFLNFLCNLIYMFIFTAVAYH). Over 412 to 434 (QPTLKKQAAPHLKAEVGNSMLLT) the chain is Extracellular. Residues 435–455 (GHILILLGGIYLLVGQLWYFW) form a helical membrane-spanning segment. Residues 456-471 (RRHVFIWISFIDSYFE) are Cytoplasmic-facing. Residues 472-492 (ILFLFQALLTVVSQVLCFLAI) form a helical membrane-spanning segment. Residue Glu-493 is a topological domain, extracellular. Residues 494–514 (WYLPLLVSALVLGWLNLLYYT) traverse the membrane as a helical segment. Over 515-537 (RGFQHTGIYSVMIQKVILRDLLR) the chain is Cytoplasmic. The chain crosses the membrane as a helical span at residues 538-558 (FLLIYLVFLFGFAVALVSLSQ). Residues 562–585 (RPEAPTGPNATESVQPMEGQEDEG) form a disordered region. Asn-570 carries N-linked (GlcNAc...) asparagine glycosylation. An intramembrane region (pore-forming) is located at residues 572–609 (TESVQPMEGQEDEGNGAQYRGILEASLELFKFTIGMGE). The chain crosses the membrane as a helical span at residues 622-642 (VLLLLLAYVLLTYILLLNMLI). The Cytoplasmic segment spans residues 643–764 (ALMSETVNSV…YVPVQLLQSN (122 aa)). The tract at residues 725–756 (PSGAGVPRTLENPVLASPPKEDEDGASEENYV) is disordered. Residues Ser-751 and Ser-763 each carry the phosphoserine modification.

Belongs to the transient receptor (TC 1.A.4) family. TrpV subfamily. TRPV2 sub-subfamily. Homotetramer. Interacts with a cAMP-dependent protein kinase type II regulatory subunit (PRKAR2A or PRKAR2B) and ACBD3. Interacts with SLC50A1; the interaction probably occurs intracellularly and depends on TRPV2 N-glycosylation. In terms of processing, N-glycosylated. Post-translationally, phosphorylated by PKA.

It localises to the cell membrane. The protein localises to the cytoplasm. The protein resides in the melanosome. It carries out the reaction Ca(2+)(in) = Ca(2+)(out). It catalyses the reaction Mg(2+)(in) = Mg(2+)(out). The catalysed reaction is Na(+)(in) = Na(+)(out). The enzyme catalyses K(+)(in) = K(+)(out). Calcium-permeable, non-selective cation channel with an outward rectification. Seems to be regulated, at least in part, by IGF1, PDGF and neuropeptide head activator. May transduce physical stimuli in mast cells. Activated by temperatures higher than 52 degrees Celsius; is not activated by vanilloids and acidic pH. This Homo sapiens (Human) protein is Transient receptor potential cation channel subfamily V member 2 (TRPV2).